A 102-amino-acid polypeptide reads, in one-letter code: Small ribosomal subunit protein bS6 (102 aa).

This sequence belongs to the bacterial ribosomal protein bS6 family.

Functionally, binds together with bS18 to 16S ribosomal RNA. The sequence is that of Small ribosomal subunit protein bS6 from Deinococcus deserti (strain DSM 17065 / CIP 109153 / LMG 22923 / VCD115).